The primary structure comprises 355 residues: UDP-N-acetylglucosamine--N-acetylmuramyl-(pentapeptide) pyrophosphoryl-undecaprenol N-acetylglucosamine transferase (355 aa).

UDP-N-acetyl-alpha-D-glucosamine contacts are provided by residues 14–16 (TGG), asparagine 126, arginine 162, serine 190, isoleucine 245, 264–269 (ALTVCE), and glutamine 289.

The protein belongs to the glycosyltransferase 28 family. MurG subfamily.

The protein localises to the cell inner membrane. It carries out the reaction di-trans,octa-cis-undecaprenyl diphospho-N-acetyl-alpha-D-muramoyl-L-alanyl-D-glutamyl-meso-2,6-diaminopimeloyl-D-alanyl-D-alanine + UDP-N-acetyl-alpha-D-glucosamine = di-trans,octa-cis-undecaprenyl diphospho-[N-acetyl-alpha-D-glucosaminyl-(1-&gt;4)]-N-acetyl-alpha-D-muramoyl-L-alanyl-D-glutamyl-meso-2,6-diaminopimeloyl-D-alanyl-D-alanine + UDP + H(+). Its pathway is cell wall biogenesis; peptidoglycan biosynthesis. Cell wall formation. Catalyzes the transfer of a GlcNAc subunit on undecaprenyl-pyrophosphoryl-MurNAc-pentapeptide (lipid intermediate I) to form undecaprenyl-pyrophosphoryl-MurNAc-(pentapeptide)GlcNAc (lipid intermediate II). The chain is UDP-N-acetylglucosamine--N-acetylmuramyl-(pentapeptide) pyrophosphoryl-undecaprenol N-acetylglucosamine transferase from Mannheimia succiniciproducens (strain KCTC 0769BP / MBEL55E).